Consider the following 474-residue polypeptide: MFKPSFVALALVSYATAQASAPQWGQCGGIGWTGPTACPSGWACQQLNAYYSQCLQGAAPAPARTTAAPPPPPATTAAPPPPTTSAPTGSSPVAGACGAIASTVPNYNNAKLPDPFTFANGTALRTKADWSCRRAEISALIQNYEAGTLPPKPPVVTASFSKSGNTGTLAITAGLSNSQTIKFSPTISYPSGTPPANGWPLIIAYEGGSIPIPAGVATLTYSNSDMAQQNSASSRGQGLFYQLYGSTHSASAMTAWVWGVSRIIDALEMTPTAQINTQRIGVTGCSRDGKGALMAGAFEERIALTIPQESGSGGDACWRLSKYEIDNGNQVQDAVEIVGENVWFSTNFNNYVQKLPTVPEDHHLLAAMVAPRAMISFENTDYLWLSPMSSFGCMTAAHTVWQGLGIADSHGFAQVGGHAHCAWPSSLTPQLNAFINRFLLDQSATTNVFTTNNQFGKVQWNAANWITWTTPTLT.

A signal peptide spans 1–17; sequence MFKPSFVALALVSYATA. The region spanning 19–55 is the CBM1 domain; sequence ASAPQWGQCGGIGWTGPTACPSGWACQQLNAYYSQCL. The tract at residues 61–91 is disordered; it reads APARTTAAPPPPPATTAAPPPPTTSAPTGSS. The segment covering 68–84 has biased composition (pro residues); it reads APPPPPATTAAPPPPTT. An N-linked (GlcNAc...) asparagine glycan is attached at N120. Positions 284–289 match the GXSYXG catalytic site motif motif; the sequence is GCSRDG. 2 disulfides stabilise this stretch: C285-C421 and C317-C393. The active-site Nucleophile is S286. Residues K290, Q332, E340, and W384 each coordinate substrate. H420 serves as the catalytic Proton donor/acceptor.

Belongs to the carbohydrate esterase 15 (CE15) family. N-glycosylated.

The protein localises to the secreted. It catalyses the reaction a 4-O-methyl-alpha-D-glucuronosyl ester derivative + H2O = 4-O-methyl-alpha-D-glucuronate derivative + an alcohol + H(+). In terms of biological role, glucuronoyl esterase which may play a significant role in biomass degradation, as it is considered to disconnect hemicellulose from lignin through the hydrolysis of the ester bond between 4-O-methyl-D-glucuronic acid residues of glucuronoxylans and aromatic alcohols of lignin. In Cerrena unicolor (Canker rot fungus), this protein is 4-O-methyl-glucuronoyl methylesterase.